Consider the following 433-residue polypeptide: Isocitrate dehydrogenase [NADP], chloroplastic (433 aa).

The N-terminal 21 residues, 1-21, are a transit peptide targeting the chloroplast; it reads QFSPNLSFSAFFPIITFTTAT. NADP(+) contacts are provided by residues 98-100 and arginine 105; that span reads TIT. Residue threonine 100 coordinates substrate. Residues 117-123, arginine 132, and arginine 155 each bind substrate; that span reads SPNGTIR. Residue aspartate 275 coordinates Mn(2+). Lysine 283 is an NADP(+) binding site. Aspartate 298 lines the Mn(2+) pocket. NADP(+) contacts are provided by residues 333 to 338 and asparagine 351; that span reads GTVTRH.

The protein belongs to the isocitrate and isopropylmalate dehydrogenases family. The cofactor is Mg(2+). It depends on Mn(2+) as a cofactor. In terms of tissue distribution, detected in all tissues examined.

The protein localises to the plastid. The protein resides in the chloroplast. It catalyses the reaction D-threo-isocitrate + NADP(+) = 2-oxoglutarate + CO2 + NADPH. The chain is Isocitrate dehydrogenase [NADP], chloroplastic from Medicago sativa (Alfalfa).